The primary structure comprises 210 residues: Regulator of G-protein signaling 17 (210 aa).

Positions 1 to 21 (MRKRQQSQNEGTQAVSQAPGN) are disordered. The RGS domain maps to 84 to 200 (NFDKMMKTPA…LNSQIYKAFV (117 aa)). Tyrosine 137 is modified (phosphotyrosine).

In terms of assembly, interacts with GNAI1 and GNAQ. Interacts with GNAZ and GNAI2. Interacts with OPRM1. Forms a complex with mu-opioid receptors and G(alpha)z/i2 subunits, including GNAZ and GNAI2; the formation of this complex results in mu-opioid receptor desensitization. Interacts with HINT1. Post-translationally, N- and O-glycosylated in synapsomal membranes. Serine phosphorylated in synapsomal membranes. In terms of processing, sumoylated with SUMO1 and SUM02 in synaptosomes. The sumoylated forms act as a scaffold for sequestering mu-opioid receptor-activated G(alpha) subunits. Desumoylated by HINT1. In terms of tissue distribution, detected in brain (at protein level). Highly expressed in the hypothalamus, periaqueductal gray matter, and pons-medulla. Lower levels in the thalamus, cortex and spinal cord. Weak expression in the striatum and cerebellum.

It localises to the membrane. The protein localises to the synapse. The protein resides in the synaptosome. Its subcellular location is the nucleus. It is found in the cytoplasm. Functionally, regulates G protein-coupled receptor signaling cascades, including signaling via muscarinic acetylcholine receptor CHRM2 and dopamine receptor DRD2. Inhibits signal transduction by increasing the GTPase activity of G protein alpha subunits, thereby driving them into their inactive GDP-bound form. Binds selectively to GNAZ and GNAI2 subunits, accelerates their GTPase activity and regulates their signaling activities. Negatively regulates mu-opioid receptor-mediated activation of the G-proteins. The protein is Regulator of G-protein signaling 17 (Rgs17) of Mus musculus (Mouse).